A 71-amino-acid polypeptide reads, in one-letter code: Protein YqgC (71 aa).

The protein is Protein YqgC (yqgC) of Escherichia coli (strain K12).